Here is a 1201-residue protein sequence, read N- to C-terminus: Protein dduB (1201 aa).

An N-terminal signal peptide occupies residues 1–22; the sequence is MKFIKYLLILFLILKINYFVES. Over 23-1180 the chain is Extracellular; the sequence is GVDCQKNTEY…QDPSDELSTS (1158 aa). N-linked (GlcNAc...) asparagine glycosylation is found at Asn-68, Asn-122, Asn-150, Asn-185, Asn-283, Asn-348, Asn-360, Asn-437, Asn-448, Asn-518, Asn-535, Asn-554, Asn-585, Asn-631, Asn-759, Asn-815, Asn-830, Asn-844, Asn-946, Asn-1042, Asn-1058, Asn-1098, and Asn-1108. The helical transmembrane segment at 1181-1201 threads the bilayer; the sequence is SFIQLNILSLLLISIFTIFIL.

The protein resides in the membrane. This Dictyostelium discoideum (Social amoeba) protein is Protein dduB (dduB).